The sequence spans 85 residues: RNA-binding protein Hfq (85 aa).

The 61-residue stretch at 9–69 (DQLLNTARKD…ISTIIPAKII (61 aa)) folds into the Sm domain.

The protein belongs to the Hfq family. As to quaternary structure, homohexamer.

Its function is as follows. RNA chaperone that binds small regulatory RNA (sRNAs) and mRNAs to facilitate mRNA translational regulation in response to envelope stress, environmental stress and changes in metabolite concentrations. Also binds with high specificity to tRNAs. The sequence is that of RNA-binding protein Hfq from Leptospira interrogans serogroup Icterohaemorrhagiae serovar copenhageni (strain Fiocruz L1-130).